Here is a 200-residue protein sequence, read N- to C-terminus: Protein GrpE (200 aa).

Positions 1–10 (MQEKDSKDVT) are enriched in basic and acidic residues. Positions 1–57 (MQEKDSKDVTMEDEETIASQEEIEVEGNSEESSKEEESNNSEISDENLSEENLKLKD) are disordered. Acidic residues predominate over residues 11–29 (MEDEETIASQEEIEVEGNS).

The protein belongs to the GrpE family. As to quaternary structure, homodimer.

It localises to the cytoplasm. Functionally, participates actively in the response to hyperosmotic and heat shock by preventing the aggregation of stress-denatured proteins, in association with DnaK and GrpE. It is the nucleotide exchange factor for DnaK and may function as a thermosensor. Unfolded proteins bind initially to DnaJ; upon interaction with the DnaJ-bound protein, DnaK hydrolyzes its bound ATP, resulting in the formation of a stable complex. GrpE releases ADP from DnaK; ATP binding to DnaK triggers the release of the substrate protein, thus completing the reaction cycle. Several rounds of ATP-dependent interactions between DnaJ, DnaK and GrpE are required for fully efficient folding. In Clostridium acetobutylicum (strain ATCC 824 / DSM 792 / JCM 1419 / IAM 19013 / LMG 5710 / NBRC 13948 / NRRL B-527 / VKM B-1787 / 2291 / W), this protein is Protein GrpE.